A 756-amino-acid chain; its full sequence is Serine/threonine-protein kinase DCLK1 (756 aa).

Residues Ser-32 and Ser-36 each carry the phosphoserine modification. Thr-46 carries the post-translational modification Phosphothreonine. 2 consecutive Doublecortin domains span residues 57–143 (KKVR…LEYT) and 186–269 (KLVT…QDDF). The disordered stretch occupies residues 288–393 (ASASRRGTTK…QRGWRREESE (106 aa)). Residues 297–313 (KSPGPSRRSKSPASTSS) are compositionally biased toward low complexity. 13 positions are modified to phosphoserine: Ser-305, Ser-307, Ser-330, Ser-332, Ser-334, Ser-337, Ser-347, Ser-352, Ser-353, Ser-355, Ser-358, Cys-362, and Ser-364. Positions 347-364 (SQHGGSSTSLSSTKVCSS) are enriched in low complexity. Residues 366–375 (DENDGPGEGD) show a composition bias toward acidic residues. Ser-392 carries the phosphoserine modification. The Protein kinase domain occupies 406–663 (YKVGRTIGDG…AVQVLEHPWV (258 aa)). Residues 412-420 (IGDGNFAVV) and Lys-435 each bind ATP. The active-site Proton acceptor is the Asp-527. A Phosphotyrosine modification is found at Tyr-536. Residues 711-723 (QVFRRRRNQDVRS) are compositionally biased toward basic and acidic residues. The tract at residues 711 to 756 (QVFRRRRNQDVRSRYKAQPAPPELNSESEDYSPSSSETVRSPNSPF) is disordered. Ser-742, Ser-751, and Ser-754 each carry phosphoserine.

This sequence belongs to the protein kinase superfamily. CAMK Ser/Thr protein kinase family. CaMK subfamily.

It carries out the reaction L-seryl-[protein] + ATP = O-phospho-L-seryl-[protein] + ADP + H(+). The enzyme catalyses L-threonyl-[protein] + ATP = O-phospho-L-threonyl-[protein] + ADP + H(+). Functionally, probable kinase that may be involved in a calcium-signaling pathway controlling neuronal migration in the developing brain. May also participate in functions of the mature nervous system. The polypeptide is Serine/threonine-protein kinase DCLK1 (Dclk1) (Mus musculus (Mouse)).